A 165-amino-acid polypeptide reads, in one-letter code: Lipoprotein signal peptidase (165 aa).

Transmembrane regions (helical) follow at residues 66–86 (WQFWLFLVATVLAVWAILSLT) and 91–111 (NEPVLYTAFGLIMGGALGNLV). Catalysis depends on residues Asp121 and Asp139. A helical membrane pass occupies residues 132–152 (WPAFNVADIAICIGAFLAFVA).

This sequence belongs to the peptidase A8 family.

The protein resides in the cell inner membrane. The enzyme catalyses Release of signal peptides from bacterial membrane prolipoproteins. Hydrolyzes -Xaa-Yaa-Zaa-|-(S,diacylglyceryl)Cys-, in which Xaa is hydrophobic (preferably Leu), and Yaa (Ala or Ser) and Zaa (Gly or Ala) have small, neutral side chains.. The protein operates within protein modification; lipoprotein biosynthesis (signal peptide cleavage). This protein specifically catalyzes the removal of signal peptides from prolipoproteins. The polypeptide is Lipoprotein signal peptidase (Nitratidesulfovibrio vulgaris (strain DP4) (Desulfovibrio vulgaris)).